The primary structure comprises 167 residues: Peptidoglycan-binding-like protein (167 aa).

Positions 1 to 24 (MRSPKVKFLTIFTLSILITKMSFA) are cleaved as a signal peptide.

It belongs to the IagB/IpgF/P19 family.

The protein localises to the periplasm. The sequence is that of Peptidoglycan-binding-like protein (pbl) from Escherichia coli O157:H7.